Consider the following 122-residue polypeptide: Large ribosomal subunit protein uL14 (122 aa).

It belongs to the universal ribosomal protein uL14 family. Part of the 50S ribosomal subunit. Forms a cluster with proteins L3 and L19. In the 70S ribosome, L14 and L19 interact and together make contacts with the 16S rRNA in bridges B5 and B8.

Its function is as follows. Binds to 23S rRNA. Forms part of two intersubunit bridges in the 70S ribosome. This Oenococcus oeni (strain ATCC BAA-331 / PSU-1) protein is Large ribosomal subunit protein uL14.